Consider the following 422-residue polypeptide: DNA (cytosine-5)-methyltransferase 3-like (422 aa).

A compositionally biased stretch (polar residues) spans 1 to 11 (MGSRETPSSCS). The disordered stretch occupies residues 1–50 (MGSRETPSSCSKTHETLNLETPESSSTDPDSPLEEQWPKSAPDLKEEDSM). Residues 20 to 30 (ETPESSSTDPD) show a composition bias toward low complexity. The 133-residue stretch at 76 to 208 (EVNVNQRNIE…LKAFHDREGA (133 aa)) folds into the ADD domain. The segment at 87-117 (ICLCCGSLQVYAQHPLFEGGICAPCKDKFLE) adopts a GATA-type; atypical zinc-finger fold. A PHD-type; atypical zinc finger spans residues 128-184 (QSYCTICCSGHTLFICESPDCTRCYCFECVDILVGPGTSERINAMACWVCFLCLPFS).

Homodimer. Heterotetramer composed of 1 DNMT3A homodimer and 2 DNMT3L subunits (DNMT3L-DNMT3A-DNMT3A-DNMT3L). Interacts with histone H3 (via N-terminus); interaction is strongly inhibited by methylation at lysine 4 (H3K4me). Interacts with EZH2; the interaction is direct. Interacts with SPOCD1.

It is found in the nucleus. In terms of biological role, catalytically inactive regulatory factor of DNA methyltransferases that can either promote or inhibit DNA methylation depending on the context. Essential for the function of DNMT3A and DNMT3B: activates DNMT3A and DNMT3B by binding to their catalytic domain. Acts by accelerating the binding of DNA and S-adenosyl-L-methionine (AdoMet) to the methyltransferases and dissociates from the complex after DNA binding to the methyltransferases. Recognizes unmethylated histone H3 lysine 4 (H3K4me0) and induces de novo DNA methylation by recruitment or activation of DNMT3. Plays a key role in embryonic stem cells and germ cells. In germ cells, required for the methylation of imprinted loci together with DNMT3A. In male germ cells, specifically required to methylate retrotransposons, preventing their mobilization. Plays a key role in embryonic stem cells (ESCs) by acting both as an positive and negative regulator of DNA methylation. While it promotes DNA methylation of housekeeping genes together with DNMT3A and DNMT3B, it also acts as an inhibitor of DNA methylation at the promoter of bivalent genes. Interacts with the EZH2 component of the PRC2/EED-EZH2 complex, preventing interaction of DNMT3A and DNMT3B with the PRC2/EED-EZH2 complex, leading to maintain low methylation levels at the promoters of bivalent genes. Promotes differentiation of ESCs into primordial germ cells by inhibiting DNA methylation at the promoter of RHOX5, thereby activating its expression. In Rattus norvegicus (Rat), this protein is DNA (cytosine-5)-methyltransferase 3-like (Dnmt3l).